Consider the following 509-residue polypeptide: MLRRAVLCLALAVTAGWAWAAEEEDNVLVLKSSNFAEELAAHKHLLVEFYAPWCGHCKALAPEYAKAAGKLKAEGSDIRLAKVDATEESDLAQQYGVRGYPTIKFFKNGDTASPKEYTAGREADDIVNWLKKRTGPAATTLADSAAAESLVESSEVAVIGFFKDVESDAAKQFLLAAEATDDIPFGLTASSDVFSRYQVHQDGVVLFKKFDEGRNNFEGEVTKEKLLDFIKHNQLPLVIEFTEQTAPKIFGGEIKTHILLFLPRSAADHDGKLSGFKQAAEGFKGKILFIFIDSDHADNQRILEFFGLKKEECPAVRLITLEEEMTKYKPESDELTAEGITEFCQRFLEGKIKPHLMSQELPEDWDRQPVKVLVGKNFEEVAFDEKKNVFVEFYAPWCGHCKQLAPIWDKLGETYKEHQDIVIAKMDSTANEVEAVKVHSFPTLKFFPAGPGRTVIDYNGERTLDGFKKFLESGGQDGAGDEDGLEDLEEAEEPDLEEDDDQKAVRDEL.

An N-terminal signal peptide occupies residues 1 to 18; it reads MLRRAVLCLALAVTAGWA. Residues 19 to 135 enclose the Thioredoxin 1 domain; the sequence is WAAEEEDNVL…IVNWLKKRTG (117 aa). Catalysis depends on nucleophile residues Cys-54 and Cys-57. Cys-54 and Cys-57 form a disulfide bridge. N6-succinyllysine is present on residues Lys-223 and Lys-272. 2 positions are modified to phosphoserine: Ser-332 and Ser-358. The region spanning 347–476 is the Thioredoxin 2 domain; sequence FLEGKIKPHL…FKKFLESGGQ (130 aa). Residues Cys-398 and Cys-401 each act as nucleophile in the active site. Residues Cys-398 and Cys-401 are joined by a disulfide bond. Ser-428 is subject to Phosphoserine. Residues 471–509 are disordered; the sequence is LESGGQDGAGDEDGLEDLEEAEEPDLEEDDDQKAVRDEL. Acidic residues predominate over residues 479 to 501; sequence AGDEDGLEDLEEAEEPDLEEDDD. The short motif at 506–509 is the Prevents secretion from ER element; it reads RDEL.

It belongs to the protein disulfide isomerase family. As to quaternary structure, heterodimer; heterodimerizes with the protein microsomal triglyceride transfer MTTP. Homodimer. Monomers and homotetramers may also occur. Interacts with P4HA2, forming a heterotetramer consisting of 2 alpha subunits (P4HA2) and 2 beta (P4HB), where P4HB plays the role of a structural subunit; this tetramer catalyzes the formation of 4-hydroxyproline in collagen. Also constitutes the structural subunit of the microsomal triacylglycerol transfer protein MTTP in mammalian cells. Stabilizes both enzymes and retain them in the ER without contributing to the catalytic activity. Binds UBQLN1. Interacts with ERO1B. Interacts with ILDR2. Interacts with ERN1/IRE1A (via N-terminus); the interaction is enhanced by phosphorylation of P4HB by FAM20C in response to endoplasmic reticulum stress and results in attenuation of ERN1 activity. In terms of processing, phosphorylation of Ser-358 by FAM20C is induced by endoplasmic reticulum stress and results in a functional switch from oxidoreductase to molecular chaperone. It also promotes interaction with ERN1.

Its subcellular location is the endoplasmic reticulum. The protein localises to the endoplasmic reticulum lumen. It localises to the melanosome. It is found in the cell membrane. The enzyme catalyses Catalyzes the rearrangement of -S-S- bonds in proteins.. Its function is as follows. This multifunctional protein catalyzes the formation, breakage and rearrangement of disulfide bonds. At the cell surface, seems to act as a reductase that cleaves disulfide bonds of proteins attached to the cell. May therefore cause structural modifications of exofacial proteins. Inside the cell, seems to form/rearrange disulfide bonds of nascent proteins. At high concentrations and following phosphorylation by FAM20C, functions as a chaperone that inhibits aggregation of misfolded proteins. At low concentrations, facilitates aggregation (anti-chaperone activity). May be involved with other chaperones in the structural modification of the TG precursor in hormone biogenesis. Also acts as a structural subunit of various enzymes such as prolyl 4-hydroxylase and microsomal triacylglycerol transfer protein MTTP. Receptor for LGALS9; the interaction retains P4HB at the cell surface of Th2 T helper cells, increasing disulfide reductase activity at the plasma membrane, altering the plasma membrane redox state and enhancing cell migration. This chain is Protein disulfide-isomerase (P4HB), found in Oryctolagus cuniculus (Rabbit).